Consider the following 174-residue polypeptide: Type II restriction enzyme Bsp6I (174 aa).

It carries out the reaction Endonucleolytic cleavage of DNA to give specific double-stranded fragments with terminal 5'-phosphates.. In terms of biological role, a P subtype restriction enzyme that recognizes the double-stranded sequence 5'-GCNGC-3' and cleaves after C-2. The protein is Type II restriction enzyme Bsp6I of Bacillus sp. (strain RFL6).